The primary structure comprises 139 residues: Large ribosomal subunit protein eL32 (139 aa).

Belongs to the eukaryotic ribosomal protein eL32 family.

This Encephalitozoon cuniculi (strain GB-M1) (Microsporidian parasite) protein is Large ribosomal subunit protein eL32 (RPL32).